A 73-amino-acid polypeptide reads, in one-letter code: Large ribosomal subunit protein bL27c (73 aa).

It belongs to the bacterial ribosomal protein bL27 family.

It is found in the plastid. The protein resides in the chloroplast. The sequence is that of Large ribosomal subunit protein bL27c (rpl27) from Chrysochromulina alifera (Plankton alga).